Here is a 282-residue protein sequence, read N- to C-terminus: MKVIDSISTLRQTVNAWRRNGESVGFVPTMGNLHDGHLKLVKKAKAHNDNVVVSIFVNPMQFGANEDLDAYPRTIEEDKAKLISVGADAVFLPSVAEMYPAGLDAQTFVEVPGISDSHCGASRPGHFRGVATVVTKLFNMVQPDDAFFGEKDFQQLQVIRALARDLSMAVTIHGVPTEREASGLAMSSRNGYLSKEEKATASAIYEEMQRVKAGIEGGNIDFSELEDAMVTNLEAKGFKKDYCQVVNASTFKAATANDKELVLLVAMFMGKTRLIDNLQITR.

30-37 is a binding site for ATP; the sequence is MGNLHDGH. His37 (proton donor) is an active-site residue. Residue Gln61 participates in (R)-pantoate binding. Gln61 is a beta-alanine binding site. ATP is bound at residue 149 to 152; that stretch reads GEKD. Gln155 is a binding site for (R)-pantoate. Residue 186–189 participates in ATP binding; the sequence is MSSR.

It belongs to the pantothenate synthetase family. As to quaternary structure, homodimer.

It is found in the cytoplasm. The enzyme catalyses (R)-pantoate + beta-alanine + ATP = (R)-pantothenate + AMP + diphosphate + H(+). The protein operates within cofactor biosynthesis; (R)-pantothenate biosynthesis; (R)-pantothenate from (R)-pantoate and beta-alanine: step 1/1. Catalyzes the condensation of pantoate with beta-alanine in an ATP-dependent reaction via a pantoyl-adenylate intermediate. This is Pantothenate synthetase from Alteromonas mediterranea (strain DSM 17117 / CIP 110805 / LMG 28347 / Deep ecotype).